A 216-amino-acid polypeptide reads, in one-letter code: Glycerol-3-phosphate acyltransferase (216 aa).

6 helical membrane-spanning segments follow: residues Phe3–Ala23, Ile48–Val68, Phe82–Phe102, Phe112–Val132, Leu142–Leu162, and Glu166–His186.

This sequence belongs to the PlsY family. In terms of assembly, probably interacts with PlsX.

It localises to the cell inner membrane. The enzyme catalyses an acyl phosphate + sn-glycerol 3-phosphate = a 1-acyl-sn-glycero-3-phosphate + phosphate. It functions in the pathway lipid metabolism; phospholipid metabolism. In terms of biological role, catalyzes the transfer of an acyl group from acyl-phosphate (acyl-PO(4)) to glycerol-3-phosphate (G3P) to form lysophosphatidic acid (LPA). This enzyme utilizes acyl-phosphate as fatty acyl donor, but not acyl-CoA or acyl-ACP. In Leptospira interrogans serogroup Icterohaemorrhagiae serovar Lai (strain 56601), this protein is Glycerol-3-phosphate acyltransferase.